Reading from the N-terminus, the 216-residue chain is [5-(aminomethyl)furan-3-yl]methyl phosphate kinase (216 aa).

ATP-binding positions include 5–9, Gly-39, Asp-142, 147–152, and Gly-166; these read KIGGS and YDKFPG.

It belongs to the MfnE family. Homotrimer. The cofactor is Mg(2+).

It carries out the reaction [5-(aminomethyl)-3-furyl]methyl phosphate + ATP = [5-(aminomethyl)furan-3-yl]methyl diphosphate + ADP. It participates in cofactor biosynthesis; methanofuran biosynthesis. Inhibited by EDTA. Its function is as follows. Catalyzes the formation of 5-(aminomethyl)-3-furanmethanol diphosphate (F1-PP) from 5-(aminomethyl)-3-furanmethanol phosphate (F1-P) and ATP. In vitro, can also act as an adenylate kinase that catalyzes the transfer of a phosphoryl group from ATP to AMP, generating two molecules of ADP. In Methanocaldococcus jannaschii (strain ATCC 43067 / DSM 2661 / JAL-1 / JCM 10045 / NBRC 100440) (Methanococcus jannaschii), this protein is [5-(aminomethyl)furan-3-yl]methyl phosphate kinase.